The following is a 1252-amino-acid chain: MFKCPERVSVKKKEDILDLPNLVEVQIKSYKQFLQIGKLAEERENIGLEEVFREIFPIKSYNEATILEYLSYNLGVPKYSPEECIRRGITYSVTLKVRFRLTDETGIKEEEVYMGTIPIMTDKGTFIINGAERVVVSQVHRSPGINFEQEKHSKGNVLFSFRIIPYRGSWLEAVFDINDLIYIHIDRKKRRRKILAMTFIRALGYSTDADIIEEFFSVEERSLRSEKDFVALVGKVLADNVVDADSSLVYGKAGEKLSTAMLKRILDTGVQSLKIAVGADENHPIIKMLAKDPTDSYEAALKDFYRRLRPGEPATLANARSTIMRLFFDAKRYNLGRVGRYKLNKKLGFPLDDETLSQVTLRKEDVIGALKYLIRLRMGDEKTSIDDIDHLANRRVRSVGELIQNHCRSGLARMEKIVRERMNLFDFSSDTLTPGKIISAKGLVSVLKDFFSRSQLSQFMDQTNPVAELTHKRRLSALGPGGLNRERAGFEVRDVHASHYGRICPIETPEGPNIGLITSLSSFAKINEFGFIETPYRVVRDGIVTDEIEYMTADVEEECVIAQASAELDEYNMFKTPVCWARYKGEAFEADTSTVTHMDVSPKQLVSVVTGLIPFLEHDDANRALMGSNMQRQAVPLLKTEAAIVGTGLEGRAAKDSGAIIVAQEDGVVEYVDSYEIVVAKKNNPTLKDRYQLKKFLRSNSGTCINQTPLCSVGDVVTHGDVLADGPATDKGELALGKNVLVAFMPWYGYNFEDAIIISERLIKQDAYTSIYIEEFELTARDTKLGKEEITRDIPNVSEEVLANLGEDGIVRIGAEVKPGDILVGKITPKSETELAPEERLLRAIFGEKAADVKDASLTVPPGTEGVVMDVKVFSRKDRLSKSDDELVEEAVHLKDLQKEYKSQLAQLKVEHREKLGALLLNEKAPAAIVHRRSADILVQEGAIFDQETIELLERESLVDLLIAPCDMYDVLKDILSSYETAVQRLEVNYKTEAEHIKEGDADLDHGVIRQVKVYVASKRKLQVGDKMAGRHGNKGVVSKIVPEADMPFLANGETVQMILNPLGVPSRMNLGQVLETHLGYAAKTAGIYVKTPVFEGFPESRIWDMMIEQGLPEDGKSYLFDGKTGERFDSKVVVGYIYMLKLSHLIADKIHARSIGPYSLVTQQPLGGKAQMGGQRFGEMEVWALEAYGVAHMLQEILTVKSDDVSGRTRIYESIVKGENLLRSGTPESFNVLIKEMQGLGLDVRPMVVDA.

It belongs to the RNA polymerase beta chain family. As to quaternary structure, the RNAP catalytic core consists of 2 alpha, 1 beta, 1 beta' and 1 omega subunit. When a sigma factor is associated with the core the holoenzyme is formed, which can initiate transcription.

It catalyses the reaction RNA(n) + a ribonucleoside 5'-triphosphate = RNA(n+1) + diphosphate. Functionally, DNA-dependent RNA polymerase catalyzes the transcription of DNA into RNA using the four ribonucleoside triphosphates as substrates. In Chlamydia trachomatis serovar L2 (strain ATCC VR-902B / DSM 19102 / 434/Bu), this protein is DNA-directed RNA polymerase subunit beta.